We begin with the raw amino-acid sequence, 456 residues long: RUN domain-containing protein 3B (456 aa).

Residues 1–26 (MASRSLGGLSGIRGGGGGGGKKSLSS) form a disordered region. A compositionally biased stretch (gly residues) spans 8-21 (GLSGIRGGGGGGGK). Arg13 carries the post-translational modification Omega-N-methylarginine. Residues 57–189 (DDSSPEFNNF…IDFSFCLKGE (133 aa)) enclose the RUN domain. A phosphoserine mark is found at Ser215 and Ser216. Residues 300-325 (AHKLEKEQLEYIIVELQDQLTVLKNN) are a coiled coil. The segment at 382–405 (SLSQTSLDPGQSQEGDGKQDTLNI) is disordered.

It belongs to the RUNDC3 family. In terms of assembly, interacts with RAP2A.

The polypeptide is RUN domain-containing protein 3B (RUNDC3B) (Macaca fascicularis (Crab-eating macaque)).